The chain runs to 336 residues: 3-isopropylmalate dehydrogenase (336 aa).

Substrate contacts are provided by R87, R97, R121, and D211. D211, D235, and D239 together coordinate Mg(2+). 271–283 (GSAPDIAGQGIAD) serves as a coordination point for NAD(+).

The protein belongs to the isocitrate and isopropylmalate dehydrogenases family. LeuB type 2 subfamily. As to quaternary structure, homodimer. Mg(2+) serves as cofactor. Requires Mn(2+) as cofactor.

The protein localises to the cytoplasm. The catalysed reaction is (2R,3S)-3-isopropylmalate + NAD(+) = 4-methyl-2-oxopentanoate + CO2 + NADH. Its pathway is amino-acid biosynthesis; L-leucine biosynthesis; L-leucine from 3-methyl-2-oxobutanoate: step 3/4. Functionally, catalyzes the oxidation of 3-carboxy-2-hydroxy-4-methylpentanoate (3-isopropylmalate) to 3-carboxy-4-methyl-2-oxopentanoate. The product decarboxylates to 4-methyl-2 oxopentanoate. This Mycobacterium tuberculosis (strain CDC 1551 / Oshkosh) protein is 3-isopropylmalate dehydrogenase (leuB).